A 449-amino-acid chain; its full sequence is Kynurenine 3-monooxygenase (449 aa).

The protein belongs to the aromatic-ring hydroxylase family. KMO subfamily. It depends on FAD as a cofactor.

It carries out the reaction L-kynurenine + NADPH + O2 + H(+) = 3-hydroxy-L-kynurenine + NADP(+) + H2O. The protein operates within cofactor biosynthesis; NAD(+) biosynthesis; quinolinate from L-kynurenine: step 1/3. Functionally, catalyzes the hydroxylation of L-kynurenine (L-Kyn) to form 3-hydroxy-L-kynurenine (L-3OHKyn). Required for synthesis of quinolinic acid. The polypeptide is Kynurenine 3-monooxygenase (Legionella pneumophila (strain Corby)).